Consider the following 387-residue polypeptide: Oxidase FUB9 (387 aa).

A disordered region spans residues 1–20 (MSRTNLPIQPAKMSDATSSK). The FMN hydroxy acid dehydrogenase domain occupies 18–379 (SSKPQIFSIQ…TPAHLSLLNA (362 aa)). Tyrosine 44 lines the a 2-oxocarboxylate pocket. 3 residues coordinate FMN: serine 126, glutamine 150, and threonine 178. Arginine 187 is a binding site for a 2-oxocarboxylate. Lysine 250 serves as a coordination point for FMN. The active-site Proton acceptor is the histidine 274. Arginine 277 contributes to the a 2-oxocarboxylate binding site. FMN contacts are provided by residues 305–309 (DGGFR) and 328–329 (GR).

This sequence belongs to the FMN-dependent alpha-hydroxy acid dehydrogenase family. The cofactor is FMN.

Its pathway is mycotoxin biosynthesis. Its function is as follows. Oxidase; part of the gene cluster that mediates the biosynthesis of fusaric acid, a mycotoxin with low to moderate toxicity to animals and humans, but with high phytotoxic properties. L-aspartate is suggested as fusaric acid amino acid precursor that is activated and further processed to O-acetyl-L-homoserine by cluster enzymes aspartate kinase FUB3 and homoserine O-acetyltransferase FUB5, as well as enzymes of the primary metabolism. The polyketide synthase (PKS) FUB1 generates the triketide trans-2-hexenal which is presumptively released by the hydrolase FUB4 and linked to the NRPS-bound amino acid precursor by NAD(P)-dependent dehydrogenase FUB6. FUB1, FUB4, and the non-canonical NRPS Fub8 may form an enzyme complex. Further processing of the NRPS-bound intermediate might be carried out by FUB6 and the sulfhydrylase FUB7, enabling a spontaneous electrocyclization to close the carbon backbone of fusaric acid. Dihydrofusaric acid is likely to be released via reduction by the thioester reductase (TR) domain of FUB8 whereupon the final oxidation to fusaric acid may (also) be performed by the FMN-dependent dehydrogenase FUB9. This is Oxidase FUB9 from Gibberella moniliformis (strain M3125 / FGSC 7600) (Maize ear and stalk rot fungus).